We begin with the raw amino-acid sequence, 319 residues long: Aspartate carbamoyltransferase catalytic subunit (319 aa).

2 residues coordinate carbamoyl phosphate: Arg65 and Thr66. Lys93 is a binding site for L-aspartate. Positions 115, 149, and 152 each coordinate carbamoyl phosphate. Residues Arg182 and Arg237 each coordinate L-aspartate. Positions 278 and 279 each coordinate carbamoyl phosphate.

Belongs to the aspartate/ornithine carbamoyltransferase superfamily. ATCase family. In terms of assembly, heterododecamer (2C3:3R2) of six catalytic PyrB chains organized as two trimers (C3), and six regulatory PyrI chains organized as three dimers (R2).

It catalyses the reaction carbamoyl phosphate + L-aspartate = N-carbamoyl-L-aspartate + phosphate + H(+). It functions in the pathway pyrimidine metabolism; UMP biosynthesis via de novo pathway; (S)-dihydroorotate from bicarbonate: step 2/3. In terms of biological role, catalyzes the condensation of carbamoyl phosphate and aspartate to form carbamoyl aspartate and inorganic phosphate, the committed step in the de novo pyrimidine nucleotide biosynthesis pathway. The protein is Aspartate carbamoyltransferase catalytic subunit of Dechloromonas aromatica (strain RCB).